The chain runs to 408 residues: MRVRFGQYPNCGKRMVLEPGRLRPYSILRSFLDSEASAGLTLMFVAALALLLANSPFAPVYFDVLHRQVLGLTVLHWINDALMAVFFLLVGLEIKREFLDGQLATWSRRALPGIAALGGMVVPAVIFIAVNGGEPANLRGWAIPSATDIAFALGVLSLLGPRVPVSLKIFLTALAILDDLGAVLIIALFYTAELTPLMLILAAATLLGLAALNRFGVKPLAPYLVLGVVLWFFVLQSGIHATLAGVALALAIPLQASTGGGPTSPLHRLEHALNPWVAFLIVPVFGFANAGVSFAGLGLSALLDPVPLGVALGLFFGKQVGVFGFAWLAIWLKIADMPRYASWAHLYGVAVLCGIGFTMSLFIGLLAYPESAVLQDETKIGVLLGSTLAGLIGWLILRVTKAGFPERT.

The next 12 helical transmembrane spans lie at Leu-42–Phe-62, Val-69–Leu-89, Ala-110–Val-130, Gly-140–Gly-160, Ile-169–Phe-189, Ala-192–Leu-212, Phe-215–Leu-235, Gly-238–Thr-258, Val-277–Leu-297, Leu-312–Leu-332, Leu-346–Leu-366, and Ile-380–Thr-400.

This sequence belongs to the NhaA Na(+)/H(+) (TC 2.A.33) antiporter family.

Its subcellular location is the cell inner membrane. It catalyses the reaction Na(+)(in) + 2 H(+)(out) = Na(+)(out) + 2 H(+)(in). Functionally, na(+)/H(+) antiporter that extrudes sodium in exchange for external protons. This chain is Na(+)/H(+) antiporter NhaA, found in Nitrobacter hamburgensis (strain DSM 10229 / NCIMB 13809 / X14).